Here is a 603-residue protein sequence, read N- to C-terminus: MRIEDFSLKLIPSSPGVYLMKDVHDQVLYIGKAKNLKNRLASYFHEKGDSRERIPFLMKKTASIETIVVSNETEALLLENNLIKQHHPKYNVLLKDDKTFFCLAISLSHSWPKVEAIRTKAITSSQRQLIFGPYVSAEACHTLLEVISQWFPLRTCSDREFALRKRPCILYDMKRCLAPCVGYCTPEEYQGTLDKAILFLKGKIEEVVKDLEKVIQKASDNLEFEQAANYYRTLSLIKQAMAKQQVEKFHFQNIDALGLYRHKQRTILTLLTVRSGKLLGARHFSFFENAQEDQDLLSSFILQYYVSQPYIPKEILTPLPLEFPTLSYVLNAESPPRLRSPKTGYGKELLDLAYRNAKAYAATTLPSSTLPYQDFQNILRMSQYPYRIECYDNAHMQGAHATGVYIVFENNGFDPKQYRTFSIDSEKTQNDLALLEEVLLRRFHSLTTALPDMIVVDGGKTHYNKTKKIIQTLNLTGIQVVTIAKEKSNHSRGLNKEKIFCETFPEGFSLPPTSNLLQFFQILRDEAHRFAISKHRKKRGKALFEQEKIPGIGEVKRKRLLQKFKSWKQVMLSSQEELEAIPGLTKKDIAVLLARQKDFNKSD.

The GIY-YIG domain maps to 13–92; that stretch reads SSPGVYLMKD…IKQHHPKYNV (80 aa). In terms of domain architecture, UVR spans 205-240; sequence EEVVKDLEKVIQKASDNLEFEQAANYYRTLSLIKQA.

It belongs to the UvrC family. In terms of assembly, interacts with UvrB in an incision complex.

It localises to the cytoplasm. The UvrABC repair system catalyzes the recognition and processing of DNA lesions. UvrC both incises the 5' and 3' sides of the lesion. The N-terminal half is responsible for the 3' incision and the C-terminal half is responsible for the 5' incision. The sequence is that of UvrABC system protein C from Chlamydia pneumoniae (Chlamydophila pneumoniae).